A 487-amino-acid chain; its full sequence is Serine/threonine-protein kinase BSK7 (487 aa).

Gly-2 carries the N-myristoyl glycine lipid modification. A Protein kinase domain is found at 59 to 325 (ENIVSEHGEK…DLETPSHQLM (267 aa)). Residues 65-73 (HGEKAPNVV) and Lys-87 contribute to the ATP site. Asp-181 acts as the Proton acceptor in catalysis.

Belongs to the protein kinase superfamily. Ser/Thr protein kinase family.

The protein resides in the cell membrane. It carries out the reaction L-seryl-[protein] + ATP = O-phospho-L-seryl-[protein] + ADP + H(+). The enzyme catalyses L-threonyl-[protein] + ATP = O-phospho-L-threonyl-[protein] + ADP + H(+). In terms of biological role, probable serine/threonine kinase that acts as a positive regulator of brassinosteroid (BR) signaling downstream of the receptor kinase BRI1. Functions redundantly with BSK3, BSK5, BSK6 and BSK8. This Arabidopsis thaliana (Mouse-ear cress) protein is Serine/threonine-protein kinase BSK7.